The primary structure comprises 316 residues: Serpentine receptor class delta-48 (316 aa).

7 helical membrane passes run 8–28 (FFYI…IFVI), 42–62 (FLLC…LLQL), 89–109 (LFYV…FITI), 127–147 (VVII…QIDL), 185–205 (FLLT…GFFI), 236–256 (TLQS…YFVV), and 269–289 (ILPV…LYSV).

Belongs to the nematode receptor-like protein srd family.

The protein resides in the membrane. The chain is Serpentine receptor class delta-48 (srd-48) from Caenorhabditis elegans.